We begin with the raw amino-acid sequence, 1453 residues long: Collagen alpha-1(I) chain (1453 aa).

An N-terminal signal peptide occupies residues 1 to 22; the sequence is MFSFVDLRLLLLLGATALLTHG. Positions 23–151 are cleaved as a propeptide — N-terminal propeptide; it reads QEDIPEVSCI…PPGLGGNFAS (129 aa). In terms of domain architecture, VWFC spans 29-87; the sequence is VSCIHNGLRVPNGETWKPDVCLICICHNGTAVCDGVLCKEDLDCPNPQKREGECCPFCP. Asn-56 is a glycosylation site (N-linked (GlcNAc...) asparagine). Residues 97–1206 form a disordered region; it reads VIGVEGPKGD…KSQDGGRYYR (1110 aa). Composition is skewed to pro residues over residues 109–118 and 128–143; these read PQGPRGPVGP and PGLPGPPGPPGPPGPP. Residue Gln-152 is modified to Pyrrolidone carboxylic acid. The tract at residues 152–167 is nonhelical region (N-terminal); that stretch reads QMSYGYDEKSAGVSVP. Lys-160 bears the Allysine mark. Phosphoserine is present on Ser-161. The interval 168 to 1181 is triple-helical region; sequence GPMGPSGPRG…PGPPGPPGPP (1014 aa). Residues Pro-179, Pro-182, Pro-185, Pro-194, Pro-197, Pro-200, Pro-215, Pro-230, Pro-236, Pro-245, and Pro-251 each carry the 4-hydroxyproline modification. Residues 187 to 206 are compositionally biased toward low complexity; the sequence is PQGFQGPPGEPGEPGASGPM. Positions 218–232 are enriched in basic and acidic residues; it reads NGDDGEAGKPGRPGE. Lys-254 bears the 5-hydroxylysine; alternate mark. An O-linked (Gal...) hydroxylysine; alternate glycan is attached at Lys-254. Position 260 is a phosphoserine (Ser-260). 4-hydroxyproline occurs at positions 278, 281, 287, 296, and 302. Residues 307 to 320 are compositionally biased toward low complexity; the sequence is SAGARGNDGAVGAA. Residues 322-334 show a composition bias toward pro residues; the sequence is PPGPTGPTGPPGF. Residues Pro-323, Pro-332, Pro-335, Pro-362, Pro-365, Pro-377, Pro-383, Pro-392, Pro-398, Pro-401, and Pro-416 each carry the 4-hydroxyproline modification. Residues 335 to 361 are compositionally biased toward low complexity; the sequence is PGAAGAKGEAGPQGARGSEGPQGVRGE. Residues 368–418 show a composition bias toward low complexity; it reads AGAAGPAGNPGADGQPGAKGANGAPGIAGAPGFPGARGPSGPQGPSGAPGP. A 5-hydroxylysine modification is found at Lys-419. A 4-hydroxyproline mark is found at Pro-425, Pro-428, Pro-440, Pro-449, Pro-464, Pro-470, Pro-479, and Pro-485. Gly residues predominate over residues 474-483; the sequence is GERGGPGSRG. Residue Lys-494 is modified to 5-hydroxylysine. 4-hydroxyproline is present on residues Pro-503, Pro-512, Pro-518, Pro-524, Pro-533, Pro-536, Pro-545, Pro-554, Pro-560, Pro-572, Pro-581, Pro-590, Pro-593, Pro-611, Pro-629, Pro-635, Pro-641, Pro-647, Pro-653, Pro-659, Pro-671, Pro-680, Pro-692, Pro-704, Pro-707, Pro-713, Pro-719, and Pro-728. The span at 527-566 shows a compositional bias: low complexity; it reads KGLTGSPGSPGPDGKTGPPGPAGQDGRPGPAGPPGARGQA. Low complexity predominate over residues 623 to 650; sequence QGPAGSPGFQGLPGPAGPPGEAGKPGEQ. Composition is skewed to low complexity over residues 685-695 and 703-716; these read PRGNNGAPGND and APGAPGSQGAPGLQ. A Cell attachment site motif is present at residues 734-736; sequence RGD. Lys-740 is modified (5-hydroxylysine). Pro-746, Pro-761, and Pro-767 each carry 4-hydroxyproline. The span at 773 to 787 shows a compositional bias: low complexity; that stretch reads TGPSGPAGPTGARGA. Ser-776 carries the post-translational modification Phosphoserine. 8 positions are modified to 4-hydroxyproline: Pro-788, Pro-794, Pro-797, Pro-806, Pro-812, Pro-830, Pro-839, and Pro-848. A compositionally biased stretch (low complexity) spans 800 to 815; sequence AGFAGPPGADGQPGAK. Pro residues predominate over residues 829-841; it reads PPGPAGPAGPPGP. Residues 842–872 are compositionally biased toward low complexity; it reads IGNVGAPGPKGSRGAAGPPGATGFPGAAGRV. Position 851 is a 5-hydroxylysine (Lys-851). Residues Pro-860 and Pro-866 each carry the 4-hydroxyproline modification. At Pro-874 the chain carries 3-hydroxyproline. Pro-875, Pro-884, Pro-887, Pro-908, Pro-917, Pro-926, Pro-935, Pro-953, Pro-962, Pro-965, Pro-971, Pro-986, Pro-992, Pro-998, Pro-1007, and Pro-1013 each carry 4-hydroxyproline. Residues 901 to 910 are compositionally biased toward low complexity; that stretch reads ETGPAGRPGE. The segment covering 920 to 935 has biased composition (low complexity); sequence AGEKGSPGADGPAGSP. A compositionally biased stretch (pro residues) spans 985–995; that stretch reads PPGPMGPPGLA. Residues 997 to 1012 show a composition bias toward low complexity; it reads PPGESGREGSPGAEGS. Position 1022 is a 5-hydroxylysine (Lys-1022). A compositionally biased stretch (pro residues) spans 1031–1046; sequence AGPPGAPGAPGAPGPV. 3 positions are modified to 4-hydroxyproline: Pro-1034, Pro-1037, and Pro-1040. Low complexity predominate over residues 1067–1081; that stretch reads IGPAGARGPAGPQGP. A Cell attachment site motif is present at residues 1082 to 1084; the sequence is RGD. Positions 1082 to 1096 are enriched in basic and acidic residues; it reads RGDKGETGEQGDRGI. A 5-hydroxylysine modification is found at Lys-1085. At Lys-1097 the chain carries 5-hydroxylysine; alternate. A glycan (O-linked (Gal...) hydroxylysine; alternate) is linked at Lys-1097. Over residues 1102–1148 the composition is skewed to low complexity; sequence FSGLQGPPGSPGSPGEQGPSGASGPAGPRGPPGSAGSPGKDGLNGLP. 4-hydroxyproline occurs at positions 1109, 1112, 1115, 1133, and 1148. Position 1153 is a 3-hydroxyproline (Pro-1153). 4-hydroxyproline is present on Pro-1154. A compositionally biased stretch (pro residues) spans 1166–1181; that stretch reads AGPPGPPGPPGPPGPP. Residue Pro-1168 is modified to 3-hydroxyproline. Pro-1169 is modified (4-hydroxyproline). The residue at position 1171 (Pro-1171) is a 3-hydroxyproline. Pro-1172 bears the 4-hydroxyproline mark. Pro-1174 carries the post-translational modification 3-hydroxyproline. Residues Pro-1175, Pro-1178, and Pro-1181 each carry the 4-hydroxyproline modification. Residues 1176–1186 form a major antigenic determinant (of neutral salt-extracted rat skin collagen) region; it reads GPPGPPSGGYD. Positions 1182 to 1207 are nonhelical region (C-terminal); it reads SGGYDFSFLPQPPQEKSQDGGRYYRA. At Lys-1197 the chain carries Allysine. Over residues 1197-1206 the composition is skewed to basic and acidic residues; that stretch reads KSQDGGRYYR. A propeptide spans 1208 to 1453 (C-terminal propeptide); sequence DDANVVRDRD…GMDIGPACFV (246 aa). The 236-residue stretch at 1218–1453 folds into the Fibrillar collagen NC1 domain; it reads LEVDTTLKSL…GMDIGPACFV (236 aa). Disulfide bonds link Cys-1248/Cys-1280, Cys-1288/Cys-1451, and Cys-1359/Cys-1404. 5 residues coordinate Ca(2+): Asp-1266, Asn-1268, Gln-1269, Cys-1271, and Asp-1274. An N-linked (GlcNAc...) asparagine glycan is attached at Asn-1354.

It belongs to the fibrillar collagen family. In terms of assembly, trimers of one alpha 2(I) and two alpha 1(I) chains. Interacts with MRC2. Interacts with TRAM2. Interacts with MFAP4 in a Ca (2+)-dependent manner. Contains mostly 4-hydroxyproline. Proline residues at the third position of the tripeptide repeating unit (G-X-Y) are hydroxylated in some or all of the chains. Post-translationally, contains 3-hydroxyproline at a few sites. This modification occurs on the first proline residue in the sequence motif Gly-Pro-Hyp, where Hyp is 4-hydroxyproline. In terms of processing, lysine residues at the third position of the tripeptide repeating unit (G-X-Y) are 5-hydroxylated in some or all of the chains. O-glycosylated on hydroxylated lysine residues. The O-linked glycan consists of a Glc-Gal disaccharide. As to expression, forms the fibrils of tendon, ligaments and bones. In bones the fibrils are mineralized with calcium hydroxyapatite.

It is found in the secreted. The protein resides in the extracellular space. Its subcellular location is the extracellular matrix. In terms of biological role, type I collagen is a member of group I collagen (fibrillar forming collagen). The sequence is that of Collagen alpha-1(I) chain (Col1a1) from Rattus norvegicus (Rat).